A 300-amino-acid chain; its full sequence is UPF0282 protein TON_1363 (300 aa).

This sequence belongs to the UPF0282 family.

This is UPF0282 protein TON_1363 from Thermococcus onnurineus (strain NA1).